The sequence spans 238 residues: MSDKKYNVDEGEIAKFSRIADKWWDKSGEFKTLHDINPLRLDYIDGHADLCGKRVLDVGCGGGILAESMARRGAAFVKGIDMAEQSLETARLHAALNNVADIEYECIRVEDLAEAEPHSFDVVTCMEMMEHVPDPAAIVRACAKLVKPDGMVFFSTINKNPKSYLHLIVAAEYLLKFVPKGTHDWKKFIVPAELARMCRQAGLDVADTKGMTYHVLSQTYALCDSTDVNYMFACRPAF.

The S-adenosyl-L-methionine site is built by Arg40, Gly59, Asp81, and Met126.

The protein belongs to the methyltransferase superfamily. UbiG/COQ3 family.

The catalysed reaction is a 3-demethylubiquinol + S-adenosyl-L-methionine = a ubiquinol + S-adenosyl-L-homocysteine + H(+). It carries out the reaction a 3-(all-trans-polyprenyl)benzene-1,2-diol + S-adenosyl-L-methionine = a 2-methoxy-6-(all-trans-polyprenyl)phenol + S-adenosyl-L-homocysteine + H(+). The protein operates within cofactor biosynthesis; ubiquinone biosynthesis. Functionally, O-methyltransferase that catalyzes the 2 O-methylation steps in the ubiquinone biosynthetic pathway. In Neisseria meningitidis serogroup A / serotype 4A (strain DSM 15465 / Z2491), this protein is Ubiquinone biosynthesis O-methyltransferase.